An 88-amino-acid chain; its full sequence is Elongation factor 1-beta (88 aa).

Belongs to the EF-1-beta/EF-1-delta family.

Its function is as follows. Promotes the exchange of GDP for GTP in EF-1-alpha/GDP, thus allowing the regeneration of EF-1-alpha/GTP that could then be used to form the ternary complex EF-1-alpha/GTP/AAtRNA. This Thermoplasma volcanium (strain ATCC 51530 / DSM 4299 / JCM 9571 / NBRC 15438 / GSS1) protein is Elongation factor 1-beta (ef1b).